The primary structure comprises 858 residues: Putative glutamate--cysteine ligase 2-3 (858 aa).

The interval 1 to 372 (MSDARNVAVG…RDVPPAGASL (372 aa)) is carboxylate-amine ligase. Residues 373–858 (GVAPAVSAPD…GSKDTWIPRR (486 aa)) are unknown.

In the N-terminal section; belongs to the glutamate--cysteine ligase type 2 family. YbdK subfamily.

It carries out the reaction L-cysteine + L-glutamate + ATP = gamma-L-glutamyl-L-cysteine + ADP + phosphate + H(+). In terms of biological role, ATP-dependent carboxylate-amine ligase which exhibits weak glutamate--cysteine ligase activity. This Frankia alni (strain DSM 45986 / CECT 9034 / ACN14a) protein is Putative glutamate--cysteine ligase 2-3.